The primary structure comprises 55 residues: Large ribosomal subunit protein bL33 (55 aa).

This sequence belongs to the bacterial ribosomal protein bL33 family.

This is Large ribosomal subunit protein bL33 from Pseudarthrobacter chlorophenolicus (strain ATCC 700700 / DSM 12829 / CIP 107037 / JCM 12360 / KCTC 9906 / NCIMB 13794 / A6) (Arthrobacter chlorophenolicus).